We begin with the raw amino-acid sequence, 755 residues long: Ribosome biogenesis protein BOP1 (755 aa).

2 stretches are compositionally biased toward polar residues: residues 1–10 and 43–61; these read MSQEPSSSFS and ELSSSSDNGDQGQPLTEPN. Residues 1 to 65 are disordered; sequence MSQEPSSSFS…PLTEPNNIPI (65 aa). The interval 309–754 is interaction with EB1; it reads MDSMLPTLPN…SGTDGVLRLF (446 aa). Residues 335–374 form a WD 1 repeat; sequence TGTRRINGLTFSPKGMFFAVGGRDCILRVFETYSGRQVRA. Residues 482-505 are disordered; the sequence is YNEGSEDDDAAESARFNEERHQRG. The span at 496–505 shows a compositional bias: basic and acidic residues; that stretch reads RFNEERHQRG. WD repeat units lie at residues 617 to 655, 659 to 698, and 725 to 755; these read PGVKQVTASGMGYGDNFITGSADSQCALFANAAGPEPTA, YHTSTIRNIDVHPCGGLVATCSDDGIVQISRIVDASLVKM, and DGSVGISRVTWHPRQPWLLCSGTDGVLRLFK.

Belongs to the WD repeat BOP1/ERB1 family. As to quaternary structure, interacts (via C-terminal WD repeats) with giardin subunit beta. Interacts (via C-terminal WD repeats) with EB1.

It localises to the nucleus. The protein localises to the nucleolus. The protein resides in the nucleus membrane. Required for maturation of ribosomal RNAs and formation of the large ribosomal subunit. The protein is Ribosome biogenesis protein BOP1 of Giardia intestinalis (Giardia lamblia).